The following is a 342-amino-acid chain: MTNGYIGSYTKKNGKGIYRFELNENQSRIDLLETGFELEASTYLVRNNEVLYGINKEGEQCGVASLKIDDNGELHLLNKCLSSKAGTGCYVSISEDKRYLFEAVYGDGIIRMYELNTHTGEIIRLIQELAHDFPTGTHERQDHPHAHYINQTPDGKYVAVTDLGADRIVTYKFDDNGFEFYKESLFKDSDGTRHIEFHDNGKFAYVVHELSNTVSVAEYNDGKFEELERHLTIPESFDGDTKLAAVRLSHDQQFLYVSNRGHDSIAIFKVLDNGQHLELVTITESGGQFPRDFNIASSDDLLVCAHEQGDSVVTVFERNKETGKITLCDNTRVASEGVCVIF.

Belongs to the cycloisomerase 2 family.

This is an uncharacterized protein from Staphylococcus aureus (strain bovine RF122 / ET3-1).